The following is a 117-amino-acid chain: Transcription elongation factor SPT4 (117 aa).

Alanine 2 carries the post-translational modification N-acetylalanine. The interval 2 to 40 (ALETVPKDLRHLRACLLCSLVKTIDQFEYDGCDNCDAYL) is interaction with SUPT5H. The Zn(2+) site is built by cysteine 16, cysteine 19, cysteine 33, and cysteine 36. The C4-type zinc-finger motif lies at 16–36 (CLLCSLVKTIDQFEYDGCDNC).

Belongs to the SPT4 family. As to quaternary structure, interacts with SUPT5H to form DSIF. DSIF interacts with the positive transcription elongation factor b complex (P-TEFb complex), which is composed of CDK9 and cyclin-T (CCNT1 or CCNT2). DSIF interacts with RNA polymerase II, and this interaction is reduced by phosphorylation of the C-terminal domain (CTD) of POLR2A by P-TEFb. DSIF also interacts with the NELF complex, which is composed of NELFA, NELFB, NELFD and NELFE, and this interaction occurs following prior binding of DSIF to RNA polymerase II. DSIF also interacts with PRMT1/HRMT1L2, TATSF1, RNGTT/CAP1A, PRMT5/SKB1, SUPT6H, and can interact with PIN1. Ubiquitinated by UBR5 when not assembled in the DSIF complex, leading to its degradation: UBR5 recognizes and binds a degron that is not accessible when SUPT4H1 is part of the DSIF complex.

It localises to the nucleus. In terms of biological role, component of the DRB sensitivity-inducing factor complex (DSIF complex), which regulates mRNA processing and transcription elongation by RNA polymerase II. DSIF positively regulates mRNA capping by stimulating the mRNA guanylyltransferase activity of RNGTT/CAP1A. DSIF also acts cooperatively with the negative elongation factor complex (NELF complex) to enhance transcriptional pausing at sites proximal to the promoter. Transcriptional pausing may facilitate the assembly of an elongation competent RNA polymerase II complex. DSIF and NELF promote pausing by inhibition of the transcription elongation factor TFIIS/S-II. TFIIS/S-II binds to RNA polymerase II at transcription pause sites and stimulates the weak intrinsic nuclease activity of the enzyme. Cleavage of blocked transcripts by RNA polymerase II promotes the resumption of transcription from the new 3' terminus and may allow repeated attempts at transcription through natural pause sites. This is Transcription elongation factor SPT4 (SUPT4H1) from Pongo abelii (Sumatran orangutan).